A 166-amino-acid chain; its full sequence is uncharacterized protein (166 aa).

This is an uncharacterized protein from Schizosaccharomyces pombe (strain 972 / ATCC 24843) (Fission yeast).